A 374-amino-acid polypeptide reads, in one-letter code: D-amino-acid oxidase 3 (374 aa).

An N-terminal signal peptide occupies residues 1-19 (MVKYDAIILGSGVLGLSIA). The FAD site is built by serine 11, leucine 14, lysine 34, aspartate 35, alanine 46, serine 47, and glycine 51. Asparagine 180 carries an N-linked (GlcNAc...) asparagine glycan. Cysteine 214 and cysteine 271 are oxidised to a cystine. (R)-lactate is bound by residues tyrosine 229, tyrosine 246, and arginine 296. Positions 229, 246, and 296 each coordinate anthranilate. FAD contacts are provided by arginine 296, glycine 342, glycine 345, tyrosine 346, and glutamine 347. The Microbody targeting signal motif lies at 372 to 374 (AKL).

This sequence belongs to the DAMOX/DASOX family. The cofactor is FAD.

It localises to the peroxisome matrix. The catalysed reaction is a D-alpha-amino acid + O2 + H2O = a 2-oxocarboxylate + H2O2 + NH4(+). In terms of biological role, catalyzes the oxidative deamination of D-amino acids with broad substrate specificity. Enables the organism to utilize D-amino acids as a source of nutrients. Enables the organism to utilize D-asparate and D-glutamate as a nitrogen source and may also contribute to utlization of D-tryptophan, D-tyrosine and D-asparagine as a nitrogen source. Protects the organism from the toxicity of D-amino acids, including from D-glutamate. May play a role in its interaction with the host. This is D-amino-acid oxidase 3 from Cryptococcus deuterogattii (strain R265) (Cryptococcus gattii VGII (strain R265)).